Reading from the N-terminus, the 122-residue chain is Large ribosomal subunit protein uL18 (122 aa).

Belongs to the universal ribosomal protein uL18 family. Part of the 50S ribosomal subunit; part of the 5S rRNA/L5/L18/L25 subcomplex. Contacts the 5S and 23S rRNAs.

Functionally, this is one of the proteins that bind and probably mediate the attachment of the 5S RNA into the large ribosomal subunit, where it forms part of the central protuberance. The sequence is that of Large ribosomal subunit protein uL18 from Prochlorococcus marinus (strain MIT 9215).